The primary structure comprises 135 residues: Large ribosomal subunit protein uL16c (135 aa).

It belongs to the universal ribosomal protein uL16 family. As to quaternary structure, part of the 50S ribosomal subunit.

It localises to the plastid. It is found in the chloroplast. In Nymphaea alba (White water-lily), this protein is Large ribosomal subunit protein uL16c.